A 122-amino-acid chain; its full sequence is Large ribosomal subunit protein uL14 (122 aa).

It belongs to the universal ribosomal protein uL14 family. As to quaternary structure, part of the 50S ribosomal subunit. Forms a cluster with proteins L3 and L19. In the 70S ribosome, L14 and L19 interact and together make contacts with the 16S rRNA in bridges B5 and B8.

Functionally, binds to 23S rRNA. Forms part of two intersubunit bridges in the 70S ribosome. The protein is Large ribosomal subunit protein uL14 of Helicobacter hepaticus (strain ATCC 51449 / 3B1).